Consider the following 396-residue polypeptide: DNA excision repair protein ERCC-8 (396 aa).

WD repeat units follow at residues 33–73, 88–129, 133–173, 177–216, 235–274, 281–321, and 325–363; these read NKDR…LYDL, CSIG…VWDT, QTAD…LCDL, SCSH…LWDV, QAVE…LWNS, LVNY…VYTV, and EQIT…AWVP. A disordered region spans residues 371–396; the sequence is DDDETTTKSQLNPAFEDAWSSSDEEG. Phosphoserine is present on residues S390, S391, and S392.

As to quaternary structure, part of the CSA complex (also named DCX(ERCC8) complex), a DCX E3 ubiquitin-protein ligase complex containing ERCC8, RBX1, DDB1 and CUL4A; the CSA complex interacts with RNA polymerase II; upon UV irradiation it interacts with the COP9 signalosome and preferentially with the hyperphosphorylated form of RNA polymerase II. Interacts with ERCC6/CSB (via CIM motif); promoting recruitment to lesion-stalled RNA polymerase II (Pol II). Interacts with KIAA1530/UVSSA. Interacts with a subunit of RNA polymerase II TFIIH.

It localises to the nucleus. Its subcellular location is the chromosome. The protein resides in the nucleus matrix. It functions in the pathway protein modification; protein ubiquitination. Its function is as follows. Substrate-recognition component of the CSA complex, a DCX (DDB1-CUL4-X-box) E3 ubiquitin-protein ligase complex, involved in transcription-coupled nucleotide excision repair (TC-NER), a process during which RNA polymerase II-blocking lesions are rapidly removed from the transcribed strand of active genes. Following recruitment to lesion-stalled RNA polymerase II (Pol II), the CSA complex mediates ubiquitination of Pol II subunit POLR2A/RPB1 at 'Lys-1268', a critical TC-NER checkpoint, governing RNA Pol II stability and initiating DNA damage excision by TFIIH recruitment. The CSA complex also promotes the ubiquitination and subsequent proteasomal degradation of ERCC6/CSB in a UV-dependent manner; ERCC6 degradation is essential for the recovery of RNA synthesis after transcription-coupled repair. Also plays a role in DNA double-strand breaks (DSSBs) repair by non-homologous end joining (NHEJ). This chain is DNA excision repair protein ERCC-8, found in Homo sapiens (Human).